The sequence spans 343 residues: Adenine deaminase (343 aa).

Residues H17, H19, and H197 each contribute to the Zn(2+) site. E200 functions as the Proton donor in the catalytic mechanism. D278 is a Zn(2+) binding site. Residue D279 participates in substrate binding.

It belongs to the metallo-dependent hydrolases superfamily. Adenosine and AMP deaminases family. Adenine deaminase type 2 subfamily. Zn(2+) is required as a cofactor.

It carries out the reaction adenine + H2O + H(+) = hypoxanthine + NH4(+). Catalyzes the hydrolytic deamination of adenine to hypoxanthine. Plays an important role in the purine salvage pathway and in nitrogen catabolism. This Rhodopseudomonas palustris (strain BisB18) protein is Adenine deaminase.